A 136-amino-acid chain; its full sequence is Succinate dehydrogenase assembly factor 3, mitochondrial (136 aa).

A mitochondrion-targeting transit peptide spans 1–24; that stretch reads MRASMVRRMAAAASSSASSSLRPA.

The protein belongs to the complex I LYR family. SDHAF3 subfamily. As to quaternary structure, interacts with the iron-sulfur protein subunit within the SDH catalytic dimer.

The protein localises to the mitochondrion matrix. In terms of biological role, plays an essential role in the assembly of succinate dehydrogenase (SDH), an enzyme complex (also referred to as respiratory complex II) that is a component of both the tricarboxylic acid (TCA) cycle and the mitochondrial electron transport chain, and which couples the oxidation of succinate to fumarate with the reduction of ubiquinone (coenzyme Q) to ubiquinol. Promotes maturation of the iron-sulfur protein subunit of the SDH catalytic dimer, protecting it from the deleterious effects of oxidants. May act together with SDHAF1. The chain is Succinate dehydrogenase assembly factor 3, mitochondrial from Pyricularia oryzae (strain 70-15 / ATCC MYA-4617 / FGSC 8958) (Rice blast fungus).